Consider the following 147-residue polypeptide: Arginine repressor (147 aa).

Belongs to the ArgR family.

It localises to the cytoplasm. It functions in the pathway amino-acid biosynthesis; L-arginine biosynthesis [regulation]. Regulates arginine biosynthesis genes. This is Arginine repressor from Chlamydia caviae (strain ATCC VR-813 / DSM 19441 / 03DC25 / GPIC) (Chlamydophila caviae).